A 395-amino-acid chain; its full sequence is Xylose isomerase (395 aa).

Active-site residues include His-54 and Glu-57. The interval 80 to 108 (AVPAGAGRDRHEGADGDDEPVHAPGCSRD) is disordered. Mg(2+)-binding residues include Glu-189, Glu-225, His-228, Asp-253, Asp-263, Asp-265, and Asp-295.

The protein belongs to the xylose isomerase family. As to quaternary structure, homotetramer. It depends on Mg(2+) as a cofactor.

It is found in the cytoplasm. The enzyme catalyses alpha-D-xylose = alpha-D-xylulofuranose. The protein is Xylose isomerase of Streptomyces lividans.